A 539-amino-acid polypeptide reads, in one-letter code: Phosphoenolpyruvate carboxykinase (ATP) (539 aa).

Positions 64, 206, and 212 each coordinate substrate. ATP-binding positions include Lys212, His231, and 247-255 (GLSGTGKTT). Residues Lys212 and His231 each contribute to the Mn(2+) site. Asp268 serves as a coordination point for Mn(2+). ATP is bound by residues Glu296, Arg332, 448–449 (RI), and Thr454. Arg332 serves as a coordination point for substrate.

This sequence belongs to the phosphoenolpyruvate carboxykinase (ATP) family. Monomer. It depends on Mn(2+) as a cofactor.

The protein localises to the cytoplasm. The catalysed reaction is oxaloacetate + ATP = phosphoenolpyruvate + ADP + CO2. It participates in carbohydrate biosynthesis; gluconeogenesis. Involved in the gluconeogenesis. Catalyzes the conversion of oxaloacetate (OAA) to phosphoenolpyruvate (PEP) through direct phosphoryl transfer between the nucleoside triphosphate and OAA. This Salmonella arizonae (strain ATCC BAA-731 / CDC346-86 / RSK2980) protein is Phosphoenolpyruvate carboxykinase (ATP).